Reading from the N-terminus, the 406-residue chain is Kelch domain-containing protein 2 (406 aa).

Kelch repeat units follow at residues 31–85 (ERSG…NTEG), 92–136 (SGSC…ERID), 148–207 (LGVW…IWSQ), 221–259 (HACA…NELI), 271–311 (HSLT…IKFN), and 322–359 (HTAC…IFSV).

As to quaternary structure, component of a CRL2(KLHDC2) E3 ubiquitin-protein ligase complex, also named ECS(KLHDC2) complex, composed of CUL2, Elongin BC (ELOB and ELOC), RBX1 and substrate-specific adapter KLHDC2. May form oligomers as a KLHDC2-ELOB-ELOC complex; this interaction is autoinhibitory for the E3 ligase complex as the substrate-binding site of KLHDC2 is blocked in the oligomer. Interacts with CREB3; interaction is direct and specific as it does not interact with CREB1, ATF4, ATF6, JUN, FOS, CEBPA or herpes simplex virus transactivator VP16. Post-translationally, autoubiquitinated by the CRL2(KLHDC2) E3 ligase complex.

It localises to the nucleus. The protein operates within protein modification; protein ubiquitination. In terms of biological role, substrate-recognition component of a Cul2-RING (CRL2) E3 ubiquitin-protein ligase complex of the DesCEND (destruction via C-end degrons) pathway, which recognizes a C-degron located at the extreme C terminus of target proteins, leading to their ubiquitination and degradation. The C-degron recognized by the DesCEND pathway is usually a motif of less than ten residues and can be present in full-length proteins, truncated proteins or proteolytically cleaved forms. The CRL2(KLHDC2) complex specifically recognizes proteins with a diglycine (Gly-Gly) at the C-terminus, leading to their ubiquitination and degradation. The CRL2(KLHDC2) complex mediates ubiquitination and degradation of truncated SELENOK and SELENOS selenoproteins produced by failed UGA/Sec decoding, which end with a diglycine. The CRL2(KLHDC2) complex also recognizes proteolytically cleaved proteins ending with Gly-Gly, such as the N-terminal fragment of USP1, leading to their degradation. May also act as an indirect repressor of CREB3-mediated transcription by interfering with CREB3-DNA-binding. In Bos taurus (Bovine), this protein is Kelch domain-containing protein 2.